A 106-amino-acid polypeptide reads, in one-letter code: UPF0235 protein OCAR_4310/OCA5_c02140 (106 aa).

The protein belongs to the UPF0235 family.

This Afipia carboxidovorans (strain ATCC 49405 / DSM 1227 / KCTC 32145 / OM5) (Oligotropha carboxidovorans) protein is UPF0235 protein OCAR_4310/OCA5_c02140.